Here is a 67-residue protein sequence, read N- to C-terminus: Small ribosomal subunit protein bS21 (67 aa).

It belongs to the bacterial ribosomal protein bS21 family.

This chain is Small ribosomal subunit protein bS21, found in Acidiphilium cryptum (strain JF-5).